Here is a 217-residue protein sequence, read N- to C-terminus: Large ribosomal subunit protein uL3 (217 aa).

The protein belongs to the universal ribosomal protein uL3 family. As to quaternary structure, part of the 50S ribosomal subunit. Forms a cluster with proteins L14 and L19.

In terms of biological role, one of the primary rRNA binding proteins, it binds directly near the 3'-end of the 23S rRNA, where it nucleates assembly of the 50S subunit. In Mycobacterium marinum (strain ATCC BAA-535 / M), this protein is Large ribosomal subunit protein uL3.